A 234-amino-acid chain; its full sequence is MADVTVGIVVFPGSNCDHDTEYAVASFPGVKPVMLWHNDHDLKGCDAVILPGGFSYGDYLRCGAIARFSPIMREVIDFAGKGRPVLGICNGFQVLVECGLLEGALIRNAGRRFVSRQTTISVANNATIFTDRYQKGEVLRVPVAHGEGNYYASPETIESLESNGQVVFRYTDAWGNATAEANFNGSMNNIAGIVNKQGNVLGLMPHPERASEKLLGSEDGRRLFESLFAHLAGA.

The region spanning 5–234 (TVGIVVFPGS…ESLFAHLAGA (230 aa)) is the Glutamine amidotransferase type-1 domain. Residue cysteine 89 is the Nucleophile of the active site. Catalysis depends on residues histidine 206 and glutamate 208.

In terms of assembly, part of the FGAM synthase complex composed of 1 PurL, 1 PurQ and 2 PurS subunits.

The protein localises to the cytoplasm. It carries out the reaction N(2)-formyl-N(1)-(5-phospho-beta-D-ribosyl)glycinamide + L-glutamine + ATP + H2O = 2-formamido-N(1)-(5-O-phospho-beta-D-ribosyl)acetamidine + L-glutamate + ADP + phosphate + H(+). It catalyses the reaction L-glutamine + H2O = L-glutamate + NH4(+). It functions in the pathway purine metabolism; IMP biosynthesis via de novo pathway; 5-amino-1-(5-phospho-D-ribosyl)imidazole from N(2)-formyl-N(1)-(5-phospho-D-ribosyl)glycinamide: step 1/2. Functionally, part of the phosphoribosylformylglycinamidine synthase complex involved in the purines biosynthetic pathway. Catalyzes the ATP-dependent conversion of formylglycinamide ribonucleotide (FGAR) and glutamine to yield formylglycinamidine ribonucleotide (FGAM) and glutamate. The FGAM synthase complex is composed of three subunits. PurQ produces an ammonia molecule by converting glutamine to glutamate. PurL transfers the ammonia molecule to FGAR to form FGAM in an ATP-dependent manner. PurS interacts with PurQ and PurL and is thought to assist in the transfer of the ammonia molecule from PurQ to PurL. In Chlorobaculum tepidum (strain ATCC 49652 / DSM 12025 / NBRC 103806 / TLS) (Chlorobium tepidum), this protein is Phosphoribosylformylglycinamidine synthase subunit PurQ.